The following is a 126-amino-acid chain: Aspartate 1-decarboxylase (126 aa).

Ser25 serves as the catalytic Schiff-base intermediate with substrate; via pyruvic acid. Ser25 is modified (pyruvic acid (Ser)). A substrate-binding site is contributed by Thr57. The Proton donor role is filled by Tyr58. Position 73 to 75 (73 to 75) interacts with substrate; that stretch reads GAA.

Belongs to the PanD family. As to quaternary structure, heterooctamer of four alpha and four beta subunits. Pyruvate serves as cofactor. In terms of processing, is synthesized initially as an inactive proenzyme, which is activated by self-cleavage at a specific serine bond to produce a beta-subunit with a hydroxyl group at its C-terminus and an alpha-subunit with a pyruvoyl group at its N-terminus.

It localises to the cytoplasm. It catalyses the reaction L-aspartate + H(+) = beta-alanine + CO2. Its pathway is cofactor biosynthesis; (R)-pantothenate biosynthesis; beta-alanine from L-aspartate: step 1/1. Catalyzes the pyruvoyl-dependent decarboxylation of aspartate to produce beta-alanine. This chain is Aspartate 1-decarboxylase, found in Pectobacterium carotovorum subsp. carotovorum (strain PC1).